The following is a 1397-amino-acid chain: MEEISAAAVKVVPGPERPSPFSQLVYTSNDSYIVHSGDLRKIHKAASRGQVRKLEKMTKRKKTINLNIQDAQKRTALHWACVNGHEEVVTFLVDRKCQLDVLDGEHRTPLMKALQCHQEACANILIDSGADINLVDVYGNTALHYAVYSEILSVVAKLLSHGAVIEVHNKASLTPLLLSITKRSEQIVEFLLIKNANANAVNKYKCTALMLAVCHGSSEIVGMLLQQNVDVFAADICGVTAEHYAVTCGFHHIHEQIMEYIRKLSKNHQNTNPEGTSAGTPDEAAPLAERTPDTAESLVEKTPDEAAPLVERTPDTAESLVEKTPDEAASLVEGTSDKIQCLEKATSGKFEQSAEETPREITSPAKETSEKFTWPAKGRPRKIAWEKKEDTPREIMSPAKETSEKFTWAAKGRPRKIAWEKKETPVKTGCVARVTSNKTKVLEKGRSKMIACPTKESSTKASANDQRFPSESKQEEDEEYSCDSRSLFESSAKIQVCIPESIYQKVMEINREVEEPPKKPSAFKPAIEMQNSVPNKAFELKNEQTLRADPMFPPESKQKDYEENSWDSESLCETVSQKDVCLPKATHQKEIDKINGKLEESPNKDGLLKATCGMKVSIPTKALELKDMQTFKAEPPGKPSAFEPATEMQKSVPNKALELKNEQTLRADEILPSESKQKDYEENSWDTESLCETVSQKDVCLPKAAHQKEIDKINGKLEGSPVKDGLLKANCGMKVSIPTKALELMDMQTFKAEPPEKPSAFEPAIEMQKSVPNKALELKNEQTLRADEILPSESKQKDYEESSWDSESLCETVSQKDVCLPKATHQKEIDKINGKLEESPDNDGFLKAPCRMKVSIPTKALELMDMQTFKAEPPEKPSAFEPAIEMQKSVPNKALELKNEQTLRADQMFPSESKQKKVEENSWDSESLRETVSQKDVCVPKATHQKEMDKISGKLEDSTSLSKILDTVHSCERARELQKDHCEQRTGKMEQMKKKFCVLKKKLSEAKEIKSQLENQKVKWEQELCSVRLTLNQEEEKRRNADILNEKIREELGRIEEQHRKELEVKQQLEQALRIQDIELKSVESNLNQVSHTHENENYLLHENCMLKKEIAMLKLEIATLKHQYQEKENKYFEDIKILKEKNAELQMTLKLKEESLTKRASQYSGQLKVLIAENTMLTSKLKEKQDKEILEAEIESHHPRLASAVQDHDQIVTSRKSQEPAFHIAGDACLQRKMNVDVSSTIYNNEVLHQPLSEAQRKSKSLKINLNYAGDALRENTLVSEHAQRDQRETQCQMKEAEHMYQNEQDNVNKHTEQQESLDQKLFQLQSKNMWLQQQLVHAHKKADNKSKITIDIHFLERKMQHHLLKEKNEEIFNYNNHLKNRIYQYEKEKAETENS.

ANK repeat units follow at residues 72–101 (QKRT…QLDV), 105–134 (EHRT…DINL), 138–167 (YGNT…VIEV), 171–200 (ASLT…NANA), 204–233 (YKCT…DVFA), and 237–271 (CGVT…HQNT). The span at 267–279 (NHQNTNPEGTSAG) shows a compositional bias: polar residues. Disordered stretches follow at residues 267–376 (NHQN…TWPA), 453–482 (PTKE…EYSC), 782–807 (QTLR…WDSE), and 902–931 (TLRA…LRET). Basic and acidic residues-rich tracts occupy residues 290–304 (RTPD…KTPD) and 312–326 (RTPD…KTPD). Positions 455–467 (KESSTKASANDQR) are enriched in polar residues. Basic and acidic residues-rich tracts occupy residues 782–800 (QTLR…KDYE) and 913–931 (SKQK…LRET). Coiled coils occupy residues 998 to 1188 (VLKK…KQDK) and 1282 to 1327 (EHAQ…FQLQ).

As to expression, mainly expressed in breast and testis. A very faint signal is detected in placenta. Also expressed in many breast cancer cells.

In Homo sapiens (Human), this protein is Ankyrin repeat domain-containing protein 30A (ANKRD30A).